The sequence spans 285 residues: Pantothenate synthetase (285 aa).

30-37 (MGFLHEGH) lines the ATP pocket. H37 functions as the Proton donor in the catalytic mechanism. Q61 is a (R)-pantoate binding site. Q61 is a binding site for beta-alanine. 147 to 150 (GQKD) contacts ATP. Q153 lines the (R)-pantoate pocket. Residues V176 and 184–187 (KSSR) contribute to the ATP site.

This sequence belongs to the pantothenate synthetase family. Homodimer.

The protein resides in the cytoplasm. It catalyses the reaction (R)-pantoate + beta-alanine + ATP = (R)-pantothenate + AMP + diphosphate + H(+). It functions in the pathway cofactor biosynthesis; (R)-pantothenate biosynthesis; (R)-pantothenate from (R)-pantoate and beta-alanine: step 1/1. Functionally, catalyzes the condensation of pantoate with beta-alanine in an ATP-dependent reaction via a pantoyl-adenylate intermediate. The sequence is that of Pantothenate synthetase from Listeria welshimeri serovar 6b (strain ATCC 35897 / DSM 20650 / CCUG 15529 / CIP 8149 / NCTC 11857 / SLCC 5334 / V8).